Consider the following 1342-residue polypeptide: DNA-directed RNA polymerase subunit beta (1342 aa).

Belongs to the RNA polymerase beta chain family. The RNAP catalytic core consists of 2 alpha, 1 beta, 1 beta' and 1 omega subunit. When a sigma factor is associated with the core the holoenzyme is formed, which can initiate transcription.

It carries out the reaction RNA(n) + a ribonucleoside 5'-triphosphate = RNA(n+1) + diphosphate. In terms of biological role, DNA-dependent RNA polymerase catalyzes the transcription of DNA into RNA using the four ribonucleoside triphosphates as substrates. This Histophilus somni (strain 129Pt) (Haemophilus somnus) protein is DNA-directed RNA polymerase subunit beta.